The following is a 452-amino-acid chain: Glycylpeptide N-tetradecanoyltransferase (452 aa).

Residues 38-41 (YKFW), 171-173 (LCI), and 179-183 (SKRLA) contribute to the tetradecanoyl-CoA site. Leucine 452 (proton acceptor; via carboxylate) is an active-site residue.

Belongs to the NMT family. In terms of assembly, monomer.

Its subcellular location is the cytoplasm. It carries out the reaction N-terminal glycyl-[protein] + tetradecanoyl-CoA = N-tetradecanoylglycyl-[protein] + CoA + H(+). In terms of biological role, adds a myristoyl group to the N-terminal glycine residue of certain cellular proteins. This Eremothecium gossypii (strain ATCC 10895 / CBS 109.51 / FGSC 9923 / NRRL Y-1056) (Yeast) protein is Glycylpeptide N-tetradecanoyltransferase (NMT1).